Here is a 558-residue protein sequence, read N- to C-terminus: Trehalase 1 (558 aa).

This sequence belongs to the glycosyl hydrolase 15 family.

It catalyses the reaction alpha,alpha-trehalose + H2O = alpha-D-glucose + beta-D-glucose. Its pathway is glycan degradation; trehalose degradation; D-glucose from alpha,alpha-trehalose: step 1/1. Functionally, catalyzes the hydrolysis of alpha,alpha-trehalose into two molecules of D-glucose. This Sulfolobus acidocaldarius (strain ATCC 33909 / DSM 639 / JCM 8929 / NBRC 15157 / NCIMB 11770) protein is Trehalase 1 (treH1).